The following is a 106-amino-acid chain: Cytochrome c2 (106 aa).

Heme c contacts are provided by cysteine 19, cysteine 22, histidine 23, and methionine 84.

The protein belongs to the cytochrome c family. Binds 1 heme c group covalently per subunit.

In Rhodopila globiformis (Rhodopseudomonas globiformis), this protein is Cytochrome c2.